Here is a 184-residue protein sequence, read N- to C-terminus: Phosphopantetheine adenylyltransferase (184 aa).

Position 8 (serine 8) interacts with substrate. ATP contacts are provided by residues 8–9 (SF) and histidine 16. Residues lysine 40, leucine 74, and arginine 88 each contribute to the substrate site. ATP is bound by residues 89 to 91 (GLR), glutamate 99, and 123 to 129 (WSFVSST).

The protein belongs to the bacterial CoaD family. As to quaternary structure, homohexamer. The cofactor is Mg(2+).

It localises to the cytoplasm. It carries out the reaction (R)-4'-phosphopantetheine + ATP + H(+) = 3'-dephospho-CoA + diphosphate. The protein operates within cofactor biosynthesis; coenzyme A biosynthesis; CoA from (R)-pantothenate: step 4/5. Functionally, reversibly transfers an adenylyl group from ATP to 4'-phosphopantetheine, yielding dephospho-CoA (dPCoA) and pyrophosphate. The chain is Phosphopantetheine adenylyltransferase from Deinococcus geothermalis (strain DSM 11300 / CIP 105573 / AG-3a).